We begin with the raw amino-acid sequence, 420 residues long: Homeobox-containing protein 1 (420 aa).

Positions 18-49 constitute an HNF-p1 domain; sequence DEPRFTIEQIDLLQRLRRTGMTKHEILHALET. The tract at residues 56 to 139 is disordered; the sequence is EHSDKFGRRS…GKMSPTRYHA (84 aa). K60 is covalently cross-linked (Glycyl lysine isopeptide (Lys-Gly) (interchain with G-Cter in SUMO2)). Low complexity-rich tracts occupy residues 64 to 73 and 81 to 93; these read RSSYGGSSYG and ASSS…TQTQ. Residues 94 to 132 are compositionally biased toward polar residues; the sequence is HSGMSPSPSNSYDTSPQPCTTNQNGRENNERLSTSNGKM. Residue K131 forms a Glycyl lysine isopeptide (Lys-Gly) (interchain with G-Cter in SUMO2) linkage. The POU-specific atypical domain occupies 145 to 241; it reads RSYSFEASEE…PGATLSMRPA (97 aa). S148 carries the phosphoserine modification. K161 participates in a covalent cross-link: Glycyl lysine isopeptide (Lys-Gly) (interchain with G-Cter in SUMO2). S170 carries the phosphoserine modification. Glycyl lysine isopeptide (Lys-Gly) (interchain with G-Cter in SUMO2) cross-links involve residues K174, K217, and K310. The segment at residues 267 to 341 is a DNA-binding region (homeobox); the sequence is RRGSRFTWRK…NRRKEIKRRA (75 aa). The interval 353–385 is disordered; sequence IDVQSPGGHSNSDDVDGNDYSEQDDSTSHSDHQ. Positions 365-377 are enriched in acidic residues; that stretch reads DDVDGNDYSEQDD. Residue K413 forms a Glycyl lysine isopeptide (Lys-Gly) (interchain with G-Cter in SUMO1); alternate linkage. K413 participates in a covalent cross-link: Glycyl lysine isopeptide (Lys-Gly) (interchain with G-Cter in SUMO2); alternate.

In terms of assembly, associates with the telomerase holoenzyme complex. Interacts with DKC1, XRCC6 and COIL. As to expression, ubiquitous. Detected in pancreas, brain, spleen, placenta, prostate, thymus, liver, heart, bone marrow, skeletal muscle, stomach, uterus, testis, kidney, ovary, colon, lung, cardiac muscle and thyroid gland.

The protein resides in the nucleus. It is found in the cytoplasm. It localises to the chromosome. Its subcellular location is the telomere. The protein localises to the cajal body. The protein resides in the PML body. Functionally, binds directly to 5'-TTAGGG-3' repeats in telomeric DNA. Associates with the telomerase complex at sites of active telomere processing and positively regulates telomere elongation. Important for TERT binding to chromatin, indicating a role in recruitment of the telomerase complex to telomeres. Also plays a role in the alternative lengthening of telomeres (ALT) pathway in telomerase-negative cells where it promotes formation and/or maintenance of ALT-associated promyelocytic leukemia bodies (APBs). Enhances formation of telomere C-circles in ALT cells, suggesting a possible role in telomere recombination. Might also be involved in the DNA damage response at telomeres. This is Homeobox-containing protein 1 from Homo sapiens (Human).